We begin with the raw amino-acid sequence, 366 residues long: uncharacterized protein (366 aa).

The Proton donor role is filled by E139. The Nucleophile role is filled by E249.

The protein belongs to the glycosyl hydrolase 53 family.

This is an uncharacterized protein from Niallia circulans (Bacillus circulans).